Consider the following 632-residue polypeptide: MPIITLPDGTQKIFEQVVSVTQVAKSIGLSLAKAALAGEVDGQLVDTSFLIKTDANLAIITANDDKGLEIIRHSTAHLLAQATQMLYPKAQVTIGPVIDNGFYYDFVYKDGFSESDLAKIEKNMHKLVKQNLKIERFEMSRNEAIQFFKDKGEYYKTEIIESIPAGQTLSLYKQGNFIDLCRGPHVPLTAKLKAFKLMKLAGAYWRGDSNNEMLQRVYGTAWATKQDLEEHLHRLEEASRRDHRKIGKIQDLFHIQEEAPGMIFWHAKGWTLCQLIEQYMRGIFKDNDYQEVHTPQLIDKSLWEKSGHWEKFGDTMFTTSSENRDYAVKPMNCPAHIQIYNQGLKSYRDLPLRLAEFGSCHRNEPSGTLHGIMRVRNFVQDDGHIFCTPEQIQVEVSTFIDLTFAVYKHFGFDKVDIKLSTRPENHVGSDEVWDKAEAALAEALDAKVIKWEFQKGEGAFYGPKIEFVLKDCLERQWQCGTLQVDFSMPERLDAQFIDENNIKQTPVVLHRAILGSLERFVGILIEHYEGAYPCWLTPIQAVVINISGKQADFVIDITKKLKKQGLRVISDLRNEKIGFKIREHSLQRYPYILIVGDREMEKDQISVRQRGGKDLGVMSIEAFVEKINQEIL.

Residues 1–61 (MPIITLPDGT…KTDANLAIIT (61 aa)) enclose the TGS domain. Positions 242 to 533 (DHRKIGKIQD…LIEHYEGAYP (292 aa)) are catalytic. Cysteine 333, histidine 384, and histidine 510 together coordinate Zn(2+).

It belongs to the class-II aminoacyl-tRNA synthetase family. As to quaternary structure, homodimer. Zn(2+) is required as a cofactor.

The protein resides in the cytoplasm. The enzyme catalyses tRNA(Thr) + L-threonine + ATP = L-threonyl-tRNA(Thr) + AMP + diphosphate + H(+). Catalyzes the attachment of threonine to tRNA(Thr) in a two-step reaction: L-threonine is first activated by ATP to form Thr-AMP and then transferred to the acceptor end of tRNA(Thr). Also edits incorrectly charged L-seryl-tRNA(Thr). In Ruthia magnifica subsp. Calyptogena magnifica, this protein is Threonine--tRNA ligase.